We begin with the raw amino-acid sequence, 543 residues long: Chaperonin GroEL (543 aa).

Residues 30 to 33, K51, 87 to 91, G415, 480 to 482, and D496 contribute to the ATP site; these read TLGP, DGTTT, and NAL.

The protein belongs to the chaperonin (HSP60) family. As to quaternary structure, forms a cylinder of 14 subunits composed of two heptameric rings stacked back-to-back. Interacts with the co-chaperonin GroES.

The protein resides in the cytoplasm. It catalyses the reaction ATP + H2O + a folded polypeptide = ADP + phosphate + an unfolded polypeptide.. Together with its co-chaperonin GroES, plays an essential role in assisting protein folding. The GroEL-GroES system forms a nano-cage that allows encapsulation of the non-native substrate proteins and provides a physical environment optimized to promote and accelerate protein folding. This Gemmatimonas aurantiaca (strain DSM 14586 / JCM 11422 / NBRC 100505 / T-27) protein is Chaperonin GroEL.